Consider the following 452-residue polypeptide: Phosphoglucosamine mutase (452 aa).

Ser97 acts as the Phosphoserine intermediate in catalysis. Residues Ser97, Asp236, Asp238, and Asp240 each contribute to the Mg(2+) site. At Ser97 the chain carries Phosphoserine.

This sequence belongs to the phosphohexose mutase family. The cofactor is Mg(2+). In terms of processing, activated by phosphorylation.

It catalyses the reaction alpha-D-glucosamine 1-phosphate = D-glucosamine 6-phosphate. Its function is as follows. Catalyzes the conversion of glucosamine-6-phosphate to glucosamine-1-phosphate. This is Phosphoglucosamine mutase from Prochlorococcus marinus subsp. pastoris (strain CCMP1986 / NIES-2087 / MED4).